Consider the following 477-residue polypeptide: Dihydrolipoyl dehydrogenase (477 aa).

FAD is bound by residues 34 to 49 (EKYK…GGTC), Lys-58, and Gly-122. Cysteines 49 and 54 form a disulfide. NAD(+) contacts are provided by residues 188-192 (GAGVI), Glu-211, Val-245, and 276-279 (AVGR). Residues Asp-319 and Ala-327 each contribute to the FAD site. Catalysis depends on His-451, which acts as the Proton acceptor.

It belongs to the class-I pyridine nucleotide-disulfide oxidoreductase family. As to quaternary structure, homodimer. It depends on FAD as a cofactor.

Its subcellular location is the cytoplasm. It catalyses the reaction N(6)-[(R)-dihydrolipoyl]-L-lysyl-[protein] + NAD(+) = N(6)-[(R)-lipoyl]-L-lysyl-[protein] + NADH + H(+). The pyruvate dehydrogenase complex catalyzes the overall conversion of pyruvate to acetyl-CoA and CO(2). It contains multiple copies of three enzymatic components: pyruvate dehydrogenase (E1), dihydrolipoamide acetyltransferase (E2) and lipoamide dehydrogenase (E3). This is Dihydrolipoyl dehydrogenase from Azotobacter vinelandii.